The primary structure comprises 208 residues: Uracil phosphoribosyltransferase (208 aa).

5-phospho-alpha-D-ribose 1-diphosphate is bound by residues arginine 78, arginine 103, and 130–138 (DPMLATGGT). Residues isoleucine 193 and 198–200 (GDA) contribute to the uracil site. Aspartate 199 lines the 5-phospho-alpha-D-ribose 1-diphosphate pocket.

It belongs to the UPRTase family. It depends on Mg(2+) as a cofactor.

It catalyses the reaction UMP + diphosphate = 5-phospho-alpha-D-ribose 1-diphosphate + uracil. It functions in the pathway pyrimidine metabolism; UMP biosynthesis via salvage pathway; UMP from uracil: step 1/1. Its activity is regulated as follows. Allosterically activated by GTP. In terms of biological role, catalyzes the conversion of uracil and 5-phospho-alpha-D-ribose 1-diphosphate (PRPP) to UMP and diphosphate. The polypeptide is Uracil phosphoribosyltransferase (Desulforapulum autotrophicum (strain ATCC 43914 / DSM 3382 / VKM B-1955 / HRM2) (Desulfobacterium autotrophicum)).